The sequence spans 384 residues: GTPase Obg (384 aa).

The region spanning 1–159 is the Obg domain; sequence MKFIDEAKIE…RSLQLELKVL (159 aa). Disordered stretches follow at residues 20–46 and 129–149; these read ATSF…GSVW and HFKS…EGET. Positions 33-43 are enriched in gly residues; the sequence is GPDGGDGGKGG. Residues 130–143 are compositionally biased toward polar residues; the sequence is FKSSVNRAPKQSTP. In terms of domain architecture, OBG-type G spans 160-348; sequence ADVGLLGMPN…LVHQINQYLA (189 aa). Residues 166–173, 191–195, 213–216, 284–287, and 329–331 each bind GTP; these read GMPNAGKS, FTTLH, DIPG, NKLD, and SAL. Mg(2+)-binding residues include S173 and T193.

This sequence belongs to the TRAFAC class OBG-HflX-like GTPase superfamily. OBG GTPase family. In terms of assembly, monomer. It depends on Mg(2+) as a cofactor.

Its subcellular location is the cytoplasm. Its function is as follows. An essential GTPase which binds GTP, GDP and possibly (p)ppGpp with moderate affinity, with high nucleotide exchange rates and a fairly low GTP hydrolysis rate; the half-life of the GTP-bound state is about 50 minutes. Plays a role in control of the cell cycle, stress response, ribosome biogenesis and in those bacteria that undergo differentiation, in morphogenesis control. The sequence is that of GTPase Obg from Neisseria gonorrhoeae (strain ATCC 700825 / FA 1090).